Here is a 188-residue protein sequence, read N- to C-terminus: uncharacterized protein (188 aa).

Ser-14 is subject to Phosphoserine. The disordered stretch occupies residues Arg-165–His-188. The span at Lys-171–His-188 shows a compositional bias: basic residues.

It is found in the nucleus. The protein localises to the nucleolus. This is an uncharacterized protein from Schizosaccharomyces pombe (strain 972 / ATCC 24843) (Fission yeast).